We begin with the raw amino-acid sequence, 360 residues long: Heme A synthase (360 aa).

9 helical membrane passes run 29–49 (WLFAMAALVIAMVAVGGATRL), 111–131 (FLGRLIGFAFFLPLGWFWWTG), 139–159 (LGLLGLGVLGGLQGAVGWIMV), 175–195 (LAAHLTLASAIFAGLVWLAAG), 210–230 (LTALALPLLMLVQIALGGLVA), 242–262 (PLMDGAFIPPLSGLFAVTPWI), 269–289 (VALVQLNHRLAAYGLLAVAAL), 309–329 (AILGLVTAQAALGITTLLLAV), and 330–350 (PLWAGLAHQVTAMLVLGMAAV). His276 is a binding site for heme. His337 contributes to the heme binding site.

The protein belongs to the COX15/CtaA family. Type 2 subfamily. As to quaternary structure, interacts with CtaB. Heme b is required as a cofactor.

It is found in the cell membrane. It carries out the reaction Fe(II)-heme o + 2 A + H2O = Fe(II)-heme a + 2 AH2. It participates in porphyrin-containing compound metabolism; heme A biosynthesis; heme A from heme O: step 1/1. Functionally, catalyzes the conversion of heme O to heme A by two successive hydroxylations of the methyl group at C8. The first hydroxylation forms heme I, the second hydroxylation results in an unstable dihydroxymethyl group, which spontaneously dehydrates, resulting in the formyl group of heme A. The protein is Heme A synthase of Methylobacterium nodulans (strain LMG 21967 / CNCM I-2342 / ORS 2060).